The sequence spans 421 residues: MTTQFSVSGIELELLRYPSRQESNLQAWDAADEHLIKHLIDTEQTNINTAIINDNFGALTAGLLSIDPSWALTLETDAKTSLLGTTQNLSRNQLPTDTLTWVNSCDELPQGFELVLMKLPKNLNYFSHQLNRLSHVLPAGTRVLIGAKAKSINKSLLETIEKNLGAASASLTWKKTRVITCISDGKVRPLPKATTWSVPEFKLQITNLSNVFAANKLDIGARIMLDNMPKGDFKSIVDLGCGNGILGLHAKQVFPEAYIHFIDDSEMAVASARENWALNKLDNPALVGEQATFGWDDCLTHMSEGFRPDLILCNPPFHQGEAITDHIAWQMFLDAFRRLKNGGILHVVGNRHLAYHVKLQRIFKNCTTVASNGKFVILQAQKISKKALEPELEQESDLNSKLDANTEVPHPQSALYGKPKA.

A disordered region spans residues 389–421 (EPELEQESDLNSKLDANTEVPHPQSALYGKPKA).

This sequence belongs to the methyltransferase superfamily. RlmG family.

The protein resides in the cytoplasm. It carries out the reaction guanosine(1835) in 23S rRNA + S-adenosyl-L-methionine = N(2)-methylguanosine(1835) in 23S rRNA + S-adenosyl-L-homocysteine + H(+). Functionally, specifically methylates the guanine in position 1835 (m2G1835) of 23S rRNA. This Shewanella halifaxensis (strain HAW-EB4) protein is Ribosomal RNA large subunit methyltransferase G.